A 65-amino-acid polypeptide reads, in one-letter code: Large ribosomal subunit protein bL35 (65 aa).

This sequence belongs to the bacterial ribosomal protein bL35 family.

The chain is Large ribosomal subunit protein bL35 from Neisseria meningitidis serogroup A / serotype 4A (strain DSM 15465 / Z2491).